A 516-amino-acid polypeptide reads, in one-letter code: MERHPASASSRQELGRLLEAVLTSRGQANAVFDILAVLQSEEPEEIEEGVRTCSRLFGTLLEREELFVGSLPSEDTALAGSQGATYKYKVWIRHRYHSCCNRLEELLAHPTFQVKELALKTLMKFVQLEGAKPLEKPQWESHYLFPRTLFRAVVGGLLTPEDDHSLLISHFCEYLEYDDIRYHTMQVATSIMARATSQQPEVSLTLWNNAFTLLSAVSLPLQECELTNFYVKHAQTSDKWKVVHLKEHKKAFQEMWLGFLKHKLPLSLYKKVLVAMHDSILPHLAQPTLMIDFLTSACDVGGAISLLALNGLFILIHKHNLEYPDFYQKLYGLLDPSIFHVKYRARFFHLADLFLSSSHLPAYLVAAFAKRLARLALTAPPEALLMVLPLICNLLRRHPACRVMVHRPQGPELDADPYDPTEKDPARSRALESCLWELQTLQQHYHPEVSKAASVINQVLSVPEVSIAPLLELTAYEIFEQDLKKKMPESVPLEFIPAKGLLGRQDDLCTQFFCLS.

The next 3 helical transmembrane spans lie at 296 to 316, 347 to 367, and 375 to 395; these read SACD…FILI, FFHL…LVAA, and LALT…CNLL.

Belongs to the CBF/MAK21 family.

It is found in the nucleus membrane. The protein resides in the nucleus. It localises to the nucleolus. The protein is Nucleolar complex protein 4 homolog (Noc4l) of Mus musculus (Mouse).